Reading from the N-terminus, the 320-residue chain is Beta-carotene 3-hydroxylase, chloroplastic (320 aa).

The transit peptide at 1–78 directs the protein to the chloroplast; that stretch reads METQFLVSGR…EKELRGKLVV (78 aa). 2 helical membrane passes run 118 to 138 and 152 to 172; these read YLVAAVMSSFGITSMAVLSVY and LSEMFGTFALSVGAAVGMEFW. A Fatty acid hydroxylase domain is found at 165–292; the sequence is AAVGMEFWAR…KFNGVPYGLF (128 aa). The Histidine box-1 motif lies at 177–182; that stretch reads HEALWH. The Histidine box-2 signature appears at 189 to 193; sequence HESHH. A run of 2 helical transmembrane segments spans residues 204–224 and 228–248; these read DIFAIINAVPAIALLSYGFFH and IPGLCFGAGLGITVFGMAYMF. Positions 250 to 255 match the Histidine box-3 motif; the sequence is HDGLVH. A Histidine box-4 motif is present at residues 276–280; it reads HTLHH.

Belongs to the sterol desaturase family.

The protein resides in the plastid. It is found in the chloroplast membrane. It catalyses the reaction all-trans-beta-carotene + 4 reduced [2Fe-2S]-[ferredoxin] + 2 O2 + 4 H(+) = all-trans-zeaxanthin + 4 oxidized [2Fe-2S]-[ferredoxin] + 2 H2O. Nonheme diiron monooxygenase involved in the biosynthesis of xanthophylls. Specific for beta-ring hydroxylations of beta-carotene. Uses ferredoxin as an electron donor. This chain is Beta-carotene 3-hydroxylase, chloroplastic (BHY), found in Gentiana lutea (Yellow gentian).